A 437-amino-acid polypeptide reads, in one-letter code: Methylenetetrahydrofolate--tRNA-(uracil-5-)-methyltransferase TrmFO (437 aa).

10–15 (GAGLAG) lines the FAD pocket.

Belongs to the MnmG family. TrmFO subfamily. FAD is required as a cofactor.

It is found in the cytoplasm. The catalysed reaction is uridine(54) in tRNA + (6R)-5,10-methylene-5,6,7,8-tetrahydrofolate + NADH + H(+) = 5-methyluridine(54) in tRNA + (6S)-5,6,7,8-tetrahydrofolate + NAD(+). The enzyme catalyses uridine(54) in tRNA + (6R)-5,10-methylene-5,6,7,8-tetrahydrofolate + NADPH + H(+) = 5-methyluridine(54) in tRNA + (6S)-5,6,7,8-tetrahydrofolate + NADP(+). Functionally, catalyzes the folate-dependent formation of 5-methyl-uridine at position 54 (M-5-U54) in all tRNAs. The sequence is that of Methylenetetrahydrofolate--tRNA-(uracil-5-)-methyltransferase TrmFO from Lysinibacillus sphaericus (strain C3-41).